Reading from the N-terminus, the 192-residue chain is NF-kappa-B inhibitor-interacting Ras-like protein 1 (192 aa).

GTP is bound at residue 11–18 (GLLSVGKT). The short motif at 35 to 43 (DCETMEDVY) is the Effector region element. The interval 58-93 (HLYDTRGLQEGVELPKHYFSFADGFVLVYSVNNLES) is interactions with NFKBIA and NFKBIB. GTP is bound by residues 61–65 (DTRGL) and 120–123 (NKID). The disordered stretch occupies residues 168–192 (LSQPQSKSSFPLPGRKNKGNSNSEN).

The protein belongs to the small GTPase superfamily. Ras family. KappaB-Ras subfamily. As to quaternary structure, interacts with both NF-kappa-B inhibitor alpha (NFKBIA) and beta (NFKBIB) in vitro. However, it probably only interacts with NFKBIB in vivo. Forms a complex with NFKBIB and NF-kappa-B heterodimer (p50/NFKB1 and p65/RELA). Also interacts with c-Rel (REL). As to expression, widely expressed.

It localises to the cytoplasm. In terms of biological role, atypical Ras-like protein that acts as a potent regulator of NF-kappa-B activity by preventing the degradation of NF-kappa-B inhibitor beta (NFKBIB) by most signals, explaining why NFKBIB is more resistant to degradation. May act by blocking phosphorylation of NFKBIB and mediating cytoplasmic retention of p65/RELA NF-kappa-B subunit. It is unclear whether it acts as a GTPase. Both GTP- and GDP-bound forms block phosphorylation of NFKBIB. The protein is NF-kappa-B inhibitor-interacting Ras-like protein 1 (NKIRAS1) of Homo sapiens (Human).